We begin with the raw amino-acid sequence, 418 residues long: CCA-adding enzyme (418 aa).

2 residues coordinate ATP: serine 54 and arginine 57. CTP contacts are provided by serine 54 and arginine 57. Residues aspartate 66, aspartate 68, and aspartate 118 each coordinate Mg(2+). ATP is bound by residues histidine 141, lysine 161, and tyrosine 170. The CTP site is built by histidine 141, lysine 161, and tyrosine 170.

The protein belongs to the tRNA nucleotidyltransferase/poly(A) polymerase family. Archaeal CCA-adding enzyme subfamily. In terms of assembly, homodimer. Requires Mg(2+) as cofactor.

The enzyme catalyses a tRNA precursor + 2 CTP + ATP = a tRNA with a 3' CCA end + 3 diphosphate. It catalyses the reaction a tRNA with a 3' CCA end + 2 CTP + ATP = a tRNA with a 3' CCACCA end + 3 diphosphate. Functionally, catalyzes the addition and repair of the essential 3'-terminal CCA sequence in tRNAs without using a nucleic acid template. Adds these three nucleotides in the order of C, C, and A to the tRNA nucleotide-73, using CTP and ATP as substrates and producing inorganic pyrophosphate. tRNA 3'-terminal CCA addition is required both for tRNA processing and repair. Also involved in tRNA surveillance by mediating tandem CCA addition to generate a CCACCA at the 3' terminus of unstable tRNAs. While stable tRNAs receive only 3'-terminal CCA, unstable tRNAs are marked with CCACCA and rapidly degraded. The chain is CCA-adding enzyme from Pyrobaculum islandicum (strain DSM 4184 / JCM 9189 / GEO3).